A 530-amino-acid chain; its full sequence is Meiosis 1 arrest protein (530 aa).

Residues 463-530 (LHPHWESRAP…SEWEKDPSRP (68 aa)) form a disordered region. Low complexity predominate over residues 503 to 516 (ASKMPAASKSSSDA).

Its subcellular location is the cytoplasm. In terms of biological role, required for meiosis I progression during spermatogenesis. The sequence is that of Meiosis 1 arrest protein (M1AP) from Homo sapiens (Human).